We begin with the raw amino-acid sequence, 118 residues long: Small ribosomal subunit protein uS13 (118 aa).

The disordered stretch occupies residues 93 to 118 (RGLPVRGQRTKTNARTRKGPRKPIRK).

Belongs to the universal ribosomal protein uS13 family. As to quaternary structure, part of the 30S ribosomal subunit. Forms a loose heterodimer with protein S19. Forms two bridges to the 50S subunit in the 70S ribosome.

Functionally, located at the top of the head of the 30S subunit, it contacts several helices of the 16S rRNA. In the 70S ribosome it contacts the 23S rRNA (bridge B1a) and protein L5 of the 50S subunit (bridge B1b), connecting the 2 subunits; these bridges are implicated in subunit movement. Contacts the tRNAs in the A and P-sites. The sequence is that of Small ribosomal subunit protein uS13 from Pseudomonas fluorescens (strain Pf0-1).